A 674-amino-acid polypeptide reads, in one-letter code: ATP-citrate synthase subunit 1 (674 aa).

Residues 1–10 are compositionally biased toward low complexity; sequence MPSATSTNGA. The disordered stretch occupies residues 1-26; the sequence is MPSATSTNGANGNGNGNGASASPAPG. Residues 261-281 and 312-338 each bind ATP; these read LLRY…EVGG and FKTE…KNKS. Glu-278 provides a ligand contact to Mg(2+). Residue His-320 is the Tele-phosphohistidine intermediate of the active site. 339-349 contacts CoA; the sequence is MREAGFYVPDT.

The protein belongs to the succinate/malate CoA ligase alpha subunit family. Composed of two subunits.

The protein resides in the cytoplasm. The enzyme catalyses oxaloacetate + acetyl-CoA + ADP + phosphate = citrate + ATP + CoA. Its function is as follows. Catalyzes the formation of cytosolic acetyl-CoA, which is mainly used for the biosynthesis of fatty acids and sterols. This is ATP-citrate synthase subunit 1 (ACL1) from Sordaria macrospora (strain ATCC MYA-333 / DSM 997 / K(L3346) / K-hell).